A 237-amino-acid chain; its full sequence is Ribose-5-phosphate isomerase A (237 aa).

Substrate is bound by residues 30 to 33, 87 to 90, and 100 to 103; these read SGST, DGAD, and KGGG. The active-site Proton acceptor is the glutamate 109. Residue lysine 127 participates in substrate binding.

This sequence belongs to the ribose 5-phosphate isomerase family. In terms of assembly, homodimer.

The catalysed reaction is aldehydo-D-ribose 5-phosphate = D-ribulose 5-phosphate. It functions in the pathway carbohydrate degradation; pentose phosphate pathway; D-ribose 5-phosphate from D-ribulose 5-phosphate (non-oxidative stage): step 1/1. Catalyzes the reversible conversion of ribose-5-phosphate to ribulose 5-phosphate. This Prochlorococcus marinus (strain SARG / CCMP1375 / SS120) protein is Ribose-5-phosphate isomerase A.